Consider the following 159-residue polypeptide: Ribosomal RNA large subunit methyltransferase H (159 aa).

Residues Leu76, Gly108, and 127 to 132 (FSKMTF) each bind S-adenosyl-L-methionine.

It belongs to the RNA methyltransferase RlmH family. In terms of assembly, homodimer.

It localises to the cytoplasm. The enzyme catalyses pseudouridine(1915) in 23S rRNA + S-adenosyl-L-methionine = N(3)-methylpseudouridine(1915) in 23S rRNA + S-adenosyl-L-homocysteine + H(+). Functionally, specifically methylates the pseudouridine at position 1915 (m3Psi1915) in 23S rRNA. The chain is Ribosomal RNA large subunit methyltransferase H from Shouchella clausii (strain KSM-K16) (Alkalihalobacillus clausii).